We begin with the raw amino-acid sequence, 234 residues long: Glucosamine-6-phosphate deaminase (234 aa).

The Proton acceptor; for enolization step role is filled by D62. N128 functions as the For ring-opening step in the catalytic mechanism. H130 serves as the catalytic Proton acceptor; for ring-opening step. The active-site For ring-opening step is E135.

This sequence belongs to the glucosamine/galactosamine-6-phosphate isomerase family. NagB subfamily.

The catalysed reaction is alpha-D-glucosamine 6-phosphate + H2O = beta-D-fructose 6-phosphate + NH4(+). The protein operates within amino-sugar metabolism; N-acetylneuraminate degradation; D-fructose 6-phosphate from N-acetylneuraminate: step 5/5. Functionally, catalyzes the reversible isomerization-deamination of glucosamine 6-phosphate (GlcN6P) to form fructose 6-phosphate (Fru6P) and ammonium ion. The protein is Glucosamine-6-phosphate deaminase of Lactobacillus delbrueckii subsp. bulgaricus (strain ATCC 11842 / DSM 20081 / BCRC 10696 / JCM 1002 / NBRC 13953 / NCIMB 11778 / NCTC 12712 / WDCM 00102 / Lb 14).